Consider the following 401-residue polypeptide: Elongation factor Tu 2 (401 aa).

Residues 10–209 (KPHVNVGTIG…AVDEYIPTPV (200 aa)) enclose the tr-type G domain. The tract at residues 19-26 (GHVDHGKT) is G1. 19 to 26 (GHVDHGKT) serves as a coordination point for GTP. Thr26 is a binding site for Mg(2+). The interval 60–64 (GITIA) is G2. The interval 81-84 (DCPG) is G3. Residues 81-85 (DCPGH) and 136-139 (NKVD) contribute to the GTP site. Residues 136 to 139 (NKVD) form a G4 region. The interval 174–176 (SAL) is G5.

The protein belongs to the TRAFAC class translation factor GTPase superfamily. Classic translation factor GTPase family. EF-Tu/EF-1A subfamily. As to quaternary structure, monomer.

It localises to the cytoplasm. It carries out the reaction GTP + H2O = GDP + phosphate + H(+). Functionally, GTP hydrolase that promotes the GTP-dependent binding of aminoacyl-tRNA to the A-site of ribosomes during protein biosynthesis. In Roseiflexus sp. (strain RS-1), this protein is Elongation factor Tu 2.